Consider the following 1512-residue polypeptide: MAAPDAMTSLVKSSVALLSSAHESLPTSLAAMKTAETAPSSTFGILGRVILSILSVLPTLLFWVSYTLPTWLFTLFSMSLTFTMNFTTLMLVLVFVVSTISYFVRYRYLTMYARLPPEPQREEPQVEVFPESQEGDSKRGLSNYLDEFLSAIKVFGYLERPVFHELTRTMQTRRLAAGETILLEEEKGFCLVVDGLVQIFVKSNREESDSDEDDGELQGESGGGSAQAHRQGYQLLTEVKNGAPMSSLFSILSLFTEDVKLRHDEDSGPSSSTPMSPQHRPSMTRNSSFNMDDSRPETPIEAQEATIRRRRTSALASPTAGGRLSNVPPLSLDTDGFNDNFKHSKQRRSPSRSTKPKSAHPDIVARATVDTTIAIIPATAFRRLTRIYPKATAHIVQVILTRLQRVTLATSHAYLSLTNEVLRTEKLMNKYTTYDLPGFLRDAPLERLKEKFTKETERLGSDEGMKGIALHNPGAGRRRRTSVSIRSSTAAQARLAAARGTSIGSNVEAISRLTSPEQGMRNDRISAGDLLTNTQMSRGTGRSGRSSFSQPYQHDVRRDARTPLDASGFNPFASPSMRPNLHRQESIDEATVFRESVLGCMFKAIGLTSPENPVPRPAASVEQSPRLVSFDAKRQKAIFTSAFGFMDPYEASRDGDADSVASASNLSTLSASGNGNLLEEVVNDVEIVFFPKDAVLVEQGERNPGLYYVIDGFLDVSVAVEEDSSESNVLGTLPTGPAVTEDDLFGPPLQPTATNTSLRNGENSKKKRSRKSLFMTRPGGLAGYLGTVSSNRSFVDVTAKTDVYVGFLPRASIERIVERYPVVLLTMAKRLTTLLPRLIQHIDFALEWVQVNAGQVIYNQGEESDAIYIVLNGRLRAIKDAENGKVTVIGEYGQGDSVGELEVLTETARPGSLHAIRDTELAKFPKTLFNSLALEHPGITIKISKIIASRMRALVDDPLHEQSKERSNKATRTNVSSTVNLRTVAILPVTAGIPVVDFASRLMNALNQIGVPRGVVSLNQAAILNHLGRHAFNRMGKLKLSQYLADLEEKYGMVLYVADTPVKSPWTQTCISQADCILLVGLAESSPNIGEYERFLLTTKTTARKELVLLHAERYCPSGLTRKWLRNWPWINGSHHHMQMSFRATAEPVHQTGRRLGNAIKQRVQVIQAEIQKYTSKRVRQTPLYSADTPFKGDFHRLARRLCGKSVGLVLGGGGARGISQIGIIRALEEAGIPIDIVGGTSIGSFIGALYAWDADVVPMYGRAKKFSGRMGSMWRFALDLTYPSASYTTGHEFNRGIFKTFGNSQIEDFWLEFYCNTTNISKSRSEIHTSGYVWRYVRASMSLAGLLPPLCDNGSMLLDGGYIDNLTVAHMKSLGADVIFAIDVGSLDEDTPQAFGDSLSGFWATFNRWNPFSTHANPPTLSEIQSRLAYVSSIDALERAKNTPGCRYMRPPIDPYGTLDFAKFEEIYEVGYKYGKGFLAQLREQGVLPVTEETEKEKNLRRTMAPRRASI.

Topologically, residues 1 to 48 (MAAPDAMTSLVKSSVALLSSAHESLPTSLAAMKTAETAPSSTFGILGR) are cytoplasmic. Residues 49 to 69 (VILSILSVLPTLLFWVSYTLP) traverse the membrane as a helical segment. Over 70 to 83 (TWLFTLFSMSLTFT) the chain is Lumenal. Residues 84 to 104 (MNFTTLMLVLVFVVSTISYFV) traverse the membrane as a helical segment. Residues 105–1512 (RYRYLTMYAR…RTMAPRRASI (1408 aa)) lie on the Cytoplasmic side of the membrane. 4 disordered regions span residues 204-230 (NREESDSDEDDGELQGESGGGSAQAHR), 262-362 (RHDE…AHPD), 534-556 (TQMSRGTGRSGRSSFSQPYQHDV), and 740-770 (TEDDLFGPPLQPTATNTSLRNGENSKKKRSR). Acidic residues predominate over residues 208–217 (SDSDEDDGEL). Residues 268-291 (GPSSSTPMSPQHRPSMTRNSSFNM) are compositionally biased toward polar residues. The span at 343 to 358 (HSKQRRSPSRSTKPKS) shows a compositional bias: basic residues. Residues 537-549 (SRGTGRSGRSSFS) show a composition bias toward low complexity. A nucleoside 3',5'-cyclic phosphate contacts are provided by residues 669-793 (LSAS…SNRS) and 830-950 (RLTT…IASR). The segment covering 751–761 (PTATNTSLRNG) has biased composition (polar residues). In terms of domain architecture, PNPLA spans 1209–1373 (LVLGGGGARG…IDNLTVAHMK (165 aa)). A GXGXXG motif is present at residues 1213-1218 (GGGARG). The GXSXG motif lies at 1240–1244 (GTSIG). Ser1242 (nucleophile) is an active-site residue. Residue Asp1360 is the Proton acceptor of the active site. The DGA/G motif lies at 1360–1362 (DGG).

It belongs to the NTE family.

It is found in the endoplasmic reticulum membrane. It catalyses the reaction a 1-acyl-sn-glycero-3-phosphocholine + H2O = sn-glycerol 3-phosphocholine + a fatty acid + H(+). With respect to regulation, inhibited by organophosphorus esters. Intracellular phospholipase B that catalyzes the double deacylation of phosphatidylcholine (PC) to glycerophosphocholine (GroPCho). Plays an important role in membrane lipid homeostasis. Responsible for the rapid PC turnover in response to inositol, elevated temperatures, or when choline is present in the growth medium. This chain is Lysophospholipase NTE1 (NTE1), found in Phaeosphaeria nodorum (strain SN15 / ATCC MYA-4574 / FGSC 10173) (Glume blotch fungus).